The chain runs to 448 residues: Ribosomal protein uS12 methylthiotransferase RimO (448 aa).

The MTTase N-terminal domain maps to 16 to 126 (PRISFVSLGC…VVAAVHEAVP (111 aa)). [4Fe-4S] cluster is bound by residues Cys-25, Cys-61, Cys-90, Cys-157, Cys-161, and Cys-164. Positions 143-380 (LTPRHYAYLK…MEAQAGVSLK (238 aa)) constitute a Radical SAM core domain. The TRAM domain occupies 383 to 448 (RAKVGKRLQV…DAYDLHGIAV (66 aa)).

This sequence belongs to the methylthiotransferase family. RimO subfamily. Requires [4Fe-4S] cluster as cofactor.

The protein resides in the cytoplasm. It carries out the reaction L-aspartate(89)-[ribosomal protein uS12]-hydrogen + (sulfur carrier)-SH + AH2 + 2 S-adenosyl-L-methionine = 3-methylsulfanyl-L-aspartate(89)-[ribosomal protein uS12]-hydrogen + (sulfur carrier)-H + 5'-deoxyadenosine + L-methionine + A + S-adenosyl-L-homocysteine + 2 H(+). Its function is as follows. Catalyzes the methylthiolation of an aspartic acid residue of ribosomal protein uS12. The chain is Ribosomal protein uS12 methylthiotransferase RimO from Methylorubrum populi (strain ATCC BAA-705 / NCIMB 13946 / BJ001) (Methylobacterium populi).